Reading from the N-terminus, the 294-residue chain is Tyrosine-protein phosphatase (294 aa).

The first 24 residues, 1-24 (MKTHHANLALALMLGLSSSATAVA), serve as a signal peptide directing secretion. Cysteine 182 serves as the catalytic Phosphocysteine intermediate. Composition is skewed to basic and acidic residues over residues 221-231 (QPKDSDERADH) and 238-247 (PGDRPQDGGH). Residues 221–252 (QPKDSDERADHGAGQAEPGDRPQDGGHGRYRA) are disordered.

Belongs to the protein-tyrosine phosphatase family. As to quaternary structure, monomer.

It catalyses the reaction O-phospho-L-tyrosyl-[protein] + H2O = L-tyrosyl-[protein] + phosphate. The polypeptide is Tyrosine-protein phosphatase (iphP) (Nostoc commune).